We begin with the raw amino-acid sequence, 662 residues long: Potassium channel KAT3 (662 aa).

Over 1–90 (MSTTTTEARS…HFDRRYRLWE (90 aa)) the chain is Cytoplasmic. A helical transmembrane segment spans residues 91–111 (LFLVILVGYSAWASLFELAFE). The Extracellular segment spans residues 112-118 (KAAEGAL). The helical transmembrane segment at 119-139 (LTIDLVVDFFFAVDIILTFFV) threads the bilayer. The Cytoplasmic segment spans residues 140-163 (SYLDNTTYLNVTDHKLIAKRYLKS). A helical membrane pass occupies residues 164 to 184 (VAFVMDVASTLPIQFIYKTIT). At 185–194 (GDVGRGQAFG) the chain is on the extracellular side. A helical; Voltage-sensor membrane pass occupies residues 195 to 215 (FLNLLRLWRLRRVAELFKRLE). Over 216–229 (KDAHFNYFVIRVIK) the chain is Cytoplasmic. Residues 230 to 250 (LLCVTIFWIHLAGCILYWIAY) traverse the membrane as a helical segment. The Extracellular portion of the chain corresponds to 251–277 (HYPRPTDTWIGSQVEDFKERSVWLGYT). The pore-forming intramembrane region spans 278–297 (YSMYWSIVTLTTVGYGDLHA). The Extracellular portion of the chain corresponds to 298 to 301 (VNSR). A helical transmembrane segment spans residues 302–322 (EKTFNMFYMLFNIGLTSYIIG). The Cytoplasmic portion of the chain corresponds to 323–662 (IMTNLVVHGA…LRENDHLYIF (340 aa)). 406-527 (LFKGFPEGLL…MIIANFMTYL (122 aa)) contacts a nucleoside 3',5'-cyclic phosphate. Residues 528-558 (KGLNDELKKEIPFLRDLLDDADAQVQETVQS) are a coiled coil. The KHA domain occupies 591 to 662 (RVIIHGQAPP…LRENDHLYIF (72 aa)).

It belongs to the potassium channel family. Plant (TC 1.A.1.4) subfamily. In terms of assembly, the potassium channel is probably composed of a homo- or heterotetrameric complex of pore-forming subunits. May interact with AKT1 and AKT2. Interacts with SLAC1. In terms of tissue distribution, expressed predominantly in root hairs and root endodermis and, at a lower level, in leaf nodes, trichomes, and hydathodes.

It is found in the membrane. Its function is as follows. Probable modulatory (alpha) subunit of inward-rectifying potassium channels. Could mediate potassium uptake from the soil solution by plant roots in association with AKT1. The polypeptide is Potassium channel KAT3 (KAT3) (Arabidopsis thaliana (Mouse-ear cress)).